Here is a 215-residue protein sequence, read N- to C-terminus: Urease accessory protein UreG (215 aa).

Residues 1–21 (MNAPAPSSARRTKKLPPLRVG) form a disordered region. GTP is bound at residue 24–31 (GPVGSGKT).

The protein belongs to the SIMIBI class G3E GTPase family. UreG subfamily. In terms of assembly, homodimer. UreD, UreF and UreG form a complex that acts as a GTP-hydrolysis-dependent molecular chaperone, activating the urease apoprotein by helping to assemble the nickel containing metallocenter of UreC. The UreE protein probably delivers the nickel.

The protein localises to the cytoplasm. In terms of biological role, facilitates the functional incorporation of the urease nickel metallocenter. This process requires GTP hydrolysis, probably effectuated by UreG. In Burkholderia lata (strain ATCC 17760 / DSM 23089 / LMG 22485 / NCIMB 9086 / R18194 / 383), this protein is Urease accessory protein UreG.